Consider the following 1790-residue polypeptide: Non-reducing polyketide synthase gsfA (1790 aa).

The interval 20 to 263 (GDQRTLFRKL…AMRKIQGMWH (244 aa)) is N-terminal acylcarrier protein transacylase domain (SAT). The region spanning 392 to 822 (SSKIAVVGMS…GGNTAMIIEE (431 aa)) is the Ketosynthase family 3 (KS3) domain. Residues C563, H698, and H741 each act as for beta-ketoacyl synthase activity in the active site. Residues 922-1223 (FAFAGQGTFY…CSTLHRDSDN (302 aa)) are malonyl-CoA:ACP transacylase (MAT) domain. The interval 1298-1615 (TSSIHRLYSE…PRIMLNRFFQ (318 aa)) is product template (PT) domain. Residues 1302-1435 (HRLYSENYDS…AYYEDPSTWL (134 aa)) form an N-terminal hotdog fold region. Residues 1302-1611 (HRLYSENYDS…FRQWPRIMLN (310 aa)) enclose the PKS/mFAS DH domain. H1334 acts as the Proton acceptor; for dehydratase activity in catalysis. The segment at 1460–1611 (MANKLTTSLA…FRQWPRIMLN (152 aa)) is C-terminal hotdog fold. The Proton donor; for dehydratase activity role is filled by D1518. 2 disordered regions span residues 1621–1648 (PPAPRVEKKRDAGRGTLPSSSSLQEKTT) and 1686–1718 (LDYSLLTPRTSPNSDERIEKTDSDSGFEEADGA). Positions 1699–1708 (SDERIEKTDS) are enriched in basic and acidic residues. The Carrier domain maps to 1716–1790 (DGANDVTSRA…TIGDLKKLLS (75 aa)). S1753 carries the O-(pantetheine 4'-phosphoryl)serine modification.

The enzyme catalyses 6 malonyl-CoA + acetyl-CoA + 4 H(+) = 2-(2,4-dihydroxy-6-oxidobenzoyl)-5-hydroxy-3-methylbenzenolate + 6 CO2 + 7 CoA + H2O. It participates in secondary metabolite biosynthesis; terpenoid biosynthesis. Functionally, norlichexanthone synthase; part of the gene cluster that mediates the biosynthesis of griseofulvin, an important antifungal drug that has been in use for a long time for treating dermatophyte infections. The first step of the pathway is the formation of the heptaketide backbone by gsfA which is initiated by priming with acetyl-CoA, followed by sequential condensations of 6 malonyl-CoA units. The resulting benzophenone can undergo a spontaneous dehydration to form norlichexanthone. However, the true precursor for the griseofulvin biosynthesis is not norlichexanthone, but the heptaketide benzophenone that is O-methylated at 3-OH by gsfB to produce griseophenone D which is further methylated at 9-OH by gsfC to yield griseophenone C. Griseophenone C is then substrate of halogenase gsfI which is responsible for the regio-specific chlorination at the C13 position to form griseophenone B. The cytochrome P450 gsfF catalyzes the coupling of orcinol and phloroglucinol rings in griseophenone B to form desmethyl-dehydrogriseofulvin A which is further methylated at 5-OH by gsfD to yield dehydrogriseofulvin. Finally, gsfE performs stereospecific reduction of enone 18 of dehydrogriseofulvin to afford the final product griseofulvin. This Penicillium aethiopicum protein is Non-reducing polyketide synthase gsfA.